The chain runs to 332 residues: rRNA biogenesis protein rrp-36 (332 aa).

Disordered stretches follow at residues 1 to 91 (MPAV…ASQL), 104 to 196 (GALK…SGKS), 243 to 262 (SMES…ELLS), and 312 to 332 (KKIA…AEDR). 3 stretches are compositionally biased toward acidic residues: residues 27 to 45 (EPDS…EEEG), 53 to 77 (DTEE…DSDA), and 117 to 127 (EDGSDDDEEKE). 2 stretches are compositionally biased toward basic and acidic residues: residues 128-142 (EPNW…MKAK) and 165-183 (RRRD…RDPR). Residues 212–274 (DYQEDEMKQL…KKKEKELIKQ (63 aa)) are a coiled coil. The segment covering 315-332 (AGKEKKALPLARRTAEDR) has biased composition (basic and acidic residues).

It belongs to the RRP36 family. As to quaternary structure, associates with 90S and pre-40S pre-ribosomal particles.

The protein localises to the nucleus. It is found in the nucleolus. Component of the 90S pre-ribosome involved in the maturation of rRNAs. Required for early cleavages of the pre-RNAs in the 40S ribosomal subunit maturation pathway. This Neurospora crassa (strain ATCC 24698 / 74-OR23-1A / CBS 708.71 / DSM 1257 / FGSC 987) protein is rRNA biogenesis protein rrp-36 (rrp-36).